The primary structure comprises 258 residues: 5'-nucleotidase SurE (258 aa).

Asp-9, Asp-10, Ser-42, and Asn-96 together coordinate a divalent metal cation.

This sequence belongs to the SurE nucleotidase family. The cofactor is a divalent metal cation.

It is found in the cytoplasm. It catalyses the reaction a ribonucleoside 5'-phosphate + H2O = a ribonucleoside + phosphate. Functionally, nucleotidase that shows phosphatase activity on nucleoside 5'-monophosphates. This chain is 5'-nucleotidase SurE, found in Campylobacter jejuni subsp. jejuni serotype O:6 (strain 81116 / NCTC 11828).